Here is a 163-residue protein sequence, read N- to C-terminus: Lipoprotein signal peptidase (163 aa).

A run of 3 helical transmembrane segments spans residues 3-23 (IPLIYNRILILFFFIANIIIL), 70-90 (NYILCLISSIAILIILKTMYN), and 94-114 (IENFFYNIPSAFIISGAIGNF). Active-site residues include Asp-125 and Asp-143. Residues 134-154 (WHFATFNIADVSIFIGSVLFI) traverse the membrane as a helical segment.

It belongs to the peptidase A8 family.

It is found in the cell membrane. It carries out the reaction Release of signal peptides from bacterial membrane prolipoproteins. Hydrolyzes -Xaa-Yaa-Zaa-|-(S,diacylglyceryl)Cys-, in which Xaa is hydrophobic (preferably Leu), and Yaa (Ala or Ser) and Zaa (Gly or Ala) have small, neutral side chains.. It participates in protein modification; lipoprotein biosynthesis (signal peptide cleavage). Functionally, this protein specifically catalyzes the removal of signal peptides from prolipoproteins. The polypeptide is Lipoprotein signal peptidase (Buchnera aphidicola subsp. Baizongia pistaciae (strain Bp)).